Here is a 64-residue protein sequence, read N- to C-terminus: Conotoxin Im11.2 (64 aa).

The first 26 residues, 1-26 (MMFRLTSVSCFLLVIVCLNLVVLTNA), serve as a signal peptide directing secretion. 4 disulfide bridges follow: C27–C41, C34–C46, C40–C50, and C45–C54. D57 is modified (aspartic acid 1-amide). Positions 61 to 64 (ATFQ) are excised as a propeptide.

Belongs to the conotoxin I2 superfamily. As to expression, expressed by the venom duct.

It localises to the secreted. This chain is Conotoxin Im11.2, found in Conus imperialis (Imperial cone).